A 75-amino-acid chain; its full sequence is Bacteriocin lactacin-F subunit LafA (75 aa).

The propeptide occupies 1 to 18; that stretch reads MKQFNYLSHKDLAVVVGG.

It belongs to the bacteriocin class IIB family. As to quaternary structure, this bacteriocin depends upon the complementation of two peptides for activity: LafA and LafX. Associated with a 180 kDa bacteriocin complex.

Functionally, heat stable bacteriocin active against Enterococcus faecalis and other Lactobacilli. The polypeptide is Bacteriocin lactacin-F subunit LafA (lafA) (Lactobacillus johnsonii (strain CNCM I-12250 / La1 / NCC 533)).